The following is a 227-amino-acid chain: Cytochrome c oxidase subunit 2 (227 aa).

Residues 1-14 are Mitochondrial intermembrane-facing; that stretch reads MAYPFQLGLQDATS. The helical transmembrane segment at 15-45 threads the bilayer; the sequence is PIMEELANFHDHTLMIVFLISSLVLYIISSM. Over 46–59 the chain is Mitochondrial matrix; it reads LTTKLTHTSTMDAQ. A helical transmembrane segment spans residues 60-87; it reads EVETIWTILPAVILILIALPSLRILYMM. Residues 88–227 are Mitochondrial intermembrane-facing; sequence DEINNPALTV…HFENWSASMI (140 aa). Cu cation-binding residues include His-161, Cys-196, Glu-198, Cys-200, His-204, and Met-207. Position 198 (Glu-198) interacts with Mg(2+).

The protein belongs to the cytochrome c oxidase subunit 2 family. Component of the cytochrome c oxidase (complex IV, CIV), a multisubunit enzyme composed of 14 subunits. The complex is composed of a catalytic core of 3 subunits MT-CO1, MT-CO2 and MT-CO3, encoded in the mitochondrial DNA, and 11 supernumerary subunits COX4I, COX5A, COX5B, COX6A, COX6B, COX6C, COX7A, COX7B, COX7C, COX8 and NDUFA4, which are encoded in the nuclear genome. The complex exists as a monomer or a dimer and forms supercomplexes (SCs) in the inner mitochondrial membrane with NADH-ubiquinone oxidoreductase (complex I, CI) and ubiquinol-cytochrome c oxidoreductase (cytochrome b-c1 complex, complex III, CIII), resulting in different assemblies (supercomplex SCI(1)III(2)IV(1) and megacomplex MCI(2)III(2)IV(2)). Found in a complex with TMEM177, COA6, COX18, COX20, SCO1 and SCO2. Interacts with TMEM177 in a COX20-dependent manner. Interacts with COX20. Interacts with COX16. Cu cation is required as a cofactor.

It is found in the mitochondrion inner membrane. The enzyme catalyses 4 Fe(II)-[cytochrome c] + O2 + 8 H(+)(in) = 4 Fe(III)-[cytochrome c] + 2 H2O + 4 H(+)(out). Component of the cytochrome c oxidase, the last enzyme in the mitochondrial electron transport chain which drives oxidative phosphorylation. The respiratory chain contains 3 multisubunit complexes succinate dehydrogenase (complex II, CII), ubiquinol-cytochrome c oxidoreductase (cytochrome b-c1 complex, complex III, CIII) and cytochrome c oxidase (complex IV, CIV), that cooperate to transfer electrons derived from NADH and succinate to molecular oxygen, creating an electrochemical gradient over the inner membrane that drives transmembrane transport and the ATP synthase. Cytochrome c oxidase is the component of the respiratory chain that catalyzes the reduction of oxygen to water. Electrons originating from reduced cytochrome c in the intermembrane space (IMS) are transferred via the dinuclear copper A center (CU(A)) of subunit 2 and heme A of subunit 1 to the active site in subunit 1, a binuclear center (BNC) formed by heme A3 and copper B (CU(B)). The BNC reduces molecular oxygen to 2 water molecules using 4 electrons from cytochrome c in the IMS and 4 protons from the mitochondrial matrix. The protein is Cytochrome c oxidase subunit 2 (MT-CO2) of Malacomys longipes (Big-eared swamp rat).